We begin with the raw amino-acid sequence, 344 residues long: Probable nicotinate-nucleotide adenylyltransferase/Ap4A hydrolase (344 aa).

Positions 1 to 182 are naMN adenylyltransferase; sequence MIFGGAFDPL…YIHQHNIYLK (182 aa). Residues 191–344 are ap4A hydrolase; the sequence is EPRMQHCLRV…LKYVRSLQKN (154 aa). Residues 193-304 enclose the HD domain; sequence RMQHCLRVGQ…IYLADKLEPM (112 aa). His-196 is an ADP binding site. Fe cation contacts are provided by His-196, His-225, and Asp-226. ADP-binding positions include 226 to 229, His-255, 281 to 282, Asp-299, and Arg-305; these read DLAK and HT. Asp-299 provides a ligand contact to Fe cation.

The protein in the N-terminal section; belongs to the NadD family. It in the C-terminal section; belongs to the Ap4A hydrolase YqeK family.

The enzyme catalyses nicotinate beta-D-ribonucleotide + ATP + H(+) = deamido-NAD(+) + diphosphate. It catalyses the reaction P(1),P(4)-bis(5'-adenosyl) tetraphosphate + H2O = 2 ADP + 2 H(+). It functions in the pathway cofactor biosynthesis; NAD(+) biosynthesis; deamido-NAD(+) from nicotinate D-ribonucleotide: step 1/1. In terms of biological role, catalyzes the reversible adenylation of nicotinate mononucleotide (NaMN) to nicotinic acid adenine dinucleotide (NaAD). Functionally, hydrolyzes diadenosine 5',5'''-P1,P4-tetraphosphate (Ap4A) to yield ADP. In Mycoplasma pneumoniae (strain ATCC 29342 / M129 / Subtype 1) (Mycoplasmoides pneumoniae), this protein is Probable nicotinate-nucleotide adenylyltransferase/Ap4A hydrolase.